Reading from the N-terminus, the 506-residue chain is Maturase K (506 aa).

This sequence belongs to the intron maturase 2 family. MatK subfamily.

It is found in the plastid. The protein resides in the chloroplast. In terms of biological role, usually encoded in the trnK tRNA gene intron. Probably assists in splicing its own and other chloroplast group II introns. The polypeptide is Maturase K (Medicago sativa (Alfalfa)).